The sequence spans 188 residues: Vascular endothelial growth factor A-A (188 aa).

The signal sequence occupies residues 1–23; the sequence is MNLVVYLIQLFLAALLHLSAVKA. 3 disulfides stabilise this stretch: Cys-49–Cys-91, Cys-80–Cys-125, and Cys-84–Cys-127. An N-linked (GlcNAc...) asparagine glycan is attached at Asn-98.

It belongs to the PDGF/VEGF growth factor family. As to quaternary structure, homodimer; disulfide-linked. Isoform VEGF165 binds kdr and kdrl. As to expression, predominantly expressed in regions associated with active vascularization. From 15-16 hours post-fertilization (hpf), expressed in the anterior forebrain, the mesoderm underlying and lateral to the anterior hindbrain, the mesoderm underlying and lateral to the posterior hindbrain, and in the ventral medial portions of the somites. By 30-36 hpf, expression in the somites is decreased, while strong expression is observed in the region of the developing glomeruli and in the anterior portion of the pronephric ducts, the pharyngeal arches, and the brain. By 72 hpf, expression remains only in the pronephros region.

It is found in the secreted. Its function is as follows. Growth factor active in angiogenesis, vasculogenesis and endothelial cell growth. Induces endothelial cell proliferation, promotes cell migration, inhibits apoptosis, and induces permeabilization of blood vessels. Required for intersegmental vessel development in the tail during embryogenesis. Acts both upstream of kdr and tie1 to stimulate endothelial cell differentiation, and upstream of gata1 to stimulate hematopoietic cell differentiation. The chain is Vascular endothelial growth factor A-A (vegfaa) from Danio rerio (Zebrafish).